Here is a 35-residue protein sequence, read N- to C-terminus: MEALVYTFLLVSTLGILFFAIFFREPPRVTPKGGK.

The helical transmembrane segment at 3-23 threads the bilayer; sequence ALVYTFLLVSTLGILFFAIFF.

It belongs to the PsbT family. In terms of assembly, PSII is composed of 1 copy each of membrane proteins PsbA, PsbB, PsbC, PsbD, PsbE, PsbF, PsbH, PsbI, PsbJ, PsbK, PsbL, PsbM, PsbT, PsbY, PsbZ, Psb30/Ycf12, at least 3 peripheral proteins of the oxygen-evolving complex and a large number of cofactors. It forms dimeric complexes.

The protein localises to the plastid. It is found in the chloroplast thylakoid membrane. In terms of biological role, found at the monomer-monomer interface of the photosystem II (PS II) dimer, plays a role in assembly and dimerization of PSII. PSII is a light-driven water plastoquinone oxidoreductase, using light energy to abstract electrons from H(2)O, generating a proton gradient subsequently used for ATP formation. In Gnetum gnemon (Spanish joint-fir), this protein is Photosystem II reaction center protein T.